The sequence spans 76 residues: Alpha-amylase inhibitor Z-2685 (76 aa).

2 disulfides stabilise this stretch: Cys-9/Cys-25 and Cys-43/Cys-70.

Its function is as follows. Inhibits mammalian alpha-amylases specifically but has no action on plant and microbial alpha-amylases. The polypeptide is Alpha-amylase inhibitor Z-2685 (Streptomyces rochei (Streptomyces parvullus)).